We begin with the raw amino-acid sequence, 416 residues long: Protein LAZY 1 (416 aa).

A helical membrane pass occupies residues F63 to I83. An IGT motif motif is present at residues G69 to T75. Disordered regions lie at residues A266–A306 and K337–L361. The span at G270–Y282 shows a compositional bias: gly residues. A Nuclear localization signal motif is present at residues K278–G295.

The protein belongs to the LAZY family. As to expression, expressed specifically in the cells at the inner side of the vascular bundles of young leaf sheaths and peripheral cylinders of vascular bundles in the unelongated stems. Expressed in the leaf sheath pulvinus and the lamina joint.

The protein resides in the cell membrane. It is found in the nucleus. In terms of biological role, involved in the regulation of shoot gravitropism and tiller angle through negative regulation of basipetal polar auxin transport (PAT). Acts as positive regulator of lateral auxin transport. Promotes vertical shoot growth. LAZY1 and TAC1 play opposite functions in the regulation of tiller growth angle. The protein is Protein LAZY 1 of Oryza sativa subsp. japonica (Rice).